Here is an 86-residue protein sequence, read N- to C-terminus: Neurotoxin LmNaTx35.2 (86 aa).

The first 21 residues, 1-21 (MQLKIQLLMLVLMTVLTGVLG), serve as a signal peptide directing secretion. In terms of domain architecture, LCN-type CS-alpha/beta spans 22–85 (KDGYVVHEDT…VYGDKGTYCW (64 aa)). Intrachain disulfides connect Cys-33/Cys-84, Cys-37/Cys-60, Cys-46/Cys-65, and Cys-50/Cys-67.

The protein belongs to the long (4 C-C) scorpion toxin superfamily. Sodium channel inhibitor family. Alpha subfamily. In terms of tissue distribution, expressed by the venom gland.

The protein localises to the secreted. Functionally, binds voltage-independently at site-3 of voltage-gated sodium channels (Nav) and inhibits the inactivation of the activated channels, thereby blocking neuronal transmission. This Lychas mucronatus (Chinese swimming scorpion) protein is Neurotoxin LmNaTx35.2.